The following is a 595-amino-acid chain: Probable carotenoid cleavage dioxygenase 4, chloroplastic (595 aa).

The transit peptide at 1-34 (MDSVSSSSFLSSTFSLHHSLLRRRSSSPTLLRIN) directs the protein to the chloroplast. The segment at 41 to 74 (RSPITNPSDNNDRRNKPKTLHNRTNHTLVSSPPK) is disordered. A compositionally biased stretch (basic residues) spans 55 to 64 (NKPKTLHNRT). Fe cation-binding residues include His-287, His-336, His-404, and His-583.

The protein belongs to the carotenoid oxygenase family. In terms of assembly, interacts with VAR3. Interacts with PGM48. The cofactor is Fe(2+). In terms of tissue distribution, mostly expressed in flowers (e.g. sepals and petals), siliques, seeds, leaves and cotyledons.

Its subcellular location is the plastid. The protein localises to the chloroplast. The protein resides in the plastoglobule. Functionally, may be involved in carotenoid cleavage. The polypeptide is Probable carotenoid cleavage dioxygenase 4, chloroplastic (CCD4) (Arabidopsis thaliana (Mouse-ear cress)).